Here is a 163-residue protein sequence, read N- to C-terminus: UPF0262 protein RPC_4416 (163 aa).

The protein belongs to the UPF0262 family.

This is UPF0262 protein RPC_4416 from Rhodopseudomonas palustris (strain BisB18).